Reading from the N-terminus, the 288-residue chain is Phosphatidylserine decarboxylase proenzyme (288 aa).

Active-site charge relay system; for autoendoproteolytic cleavage activity residues include D95, H152, and S255. Catalysis depends on S255, which acts as the Schiff-base intermediate with substrate; via pyruvic acid; for decarboxylase activity. S255 carries the post-translational modification Pyruvic acid (Ser); by autocatalysis.

It belongs to the phosphatidylserine decarboxylase family. PSD-B subfamily. Prokaryotic type I sub-subfamily. Heterodimer of a large membrane-associated beta subunit and a small pyruvoyl-containing alpha subunit. The cofactor is pyruvate. Post-translationally, is synthesized initially as an inactive proenzyme. Formation of the active enzyme involves a self-maturation process in which the active site pyruvoyl group is generated from an internal serine residue via an autocatalytic post-translational modification. Two non-identical subunits are generated from the proenzyme in this reaction, and the pyruvate is formed at the N-terminus of the alpha chain, which is derived from the carboxyl end of the proenzyme. The autoendoproteolytic cleavage occurs by a canonical serine protease mechanism, in which the side chain hydroxyl group of the serine supplies its oxygen atom to form the C-terminus of the beta chain, while the remainder of the serine residue undergoes an oxidative deamination to produce ammonia and the pyruvoyl prosthetic group on the alpha chain. During this reaction, the Ser that is part of the protease active site of the proenzyme becomes the pyruvoyl prosthetic group, which constitutes an essential element of the active site of the mature decarboxylase.

It is found in the cell membrane. It carries out the reaction a 1,2-diacyl-sn-glycero-3-phospho-L-serine + H(+) = a 1,2-diacyl-sn-glycero-3-phosphoethanolamine + CO2. Its pathway is phospholipid metabolism; phosphatidylethanolamine biosynthesis; phosphatidylethanolamine from CDP-diacylglycerol: step 2/2. Catalyzes the formation of phosphatidylethanolamine (PtdEtn) from phosphatidylserine (PtdSer). The chain is Phosphatidylserine decarboxylase proenzyme from Methylococcus capsulatus (strain ATCC 33009 / NCIMB 11132 / Bath).